We begin with the raw amino-acid sequence, 858 residues long: Neural cell adhesion molecule 1 (858 aa).

Positions 1-19 (MLRTKDLIWTLFFLGTAVS) are cleaved as a signal peptide. Ig-like C2-type domains lie at 20-111 (LQVD…ATVN), 116-205 (QKLM…KDIQ), 212-302 (PTVQ…ASIH), 309-414 (PKIT…LEVQ), and 417-502 (PKLQ…ESLE). Residues 20 to 721 (LQVDIVPSQG…NGSPTAGLST (702 aa)) lie on the Extracellular side of the membrane. Cystine bridges form between Cys-41-Cys-96 and Cys-139-Cys-189. Residues 152–156 (KHKGR) and 161–165 (KKDVR) each bind heparin. N-linked (GlcNAc...) asparagine glycosylation occurs at Asn-222. The cysteines at positions 235 and 288 are disulfide-linked. Asn-316, Asn-348, Asn-434, Asn-460, and Asn-489 each carry an N-linked (GlcNAc...) asparagine glycan. A disulfide bridge links Cys-330 with Cys-396. Cysteines 437 and 490 form a disulfide. Fibronectin type-III domains follow at residues 510-609 (TPSS…TQPV) and 611-706 (EPSA…SAQP). The helical transmembrane segment at 722–739 (GAIVGILIVIFVLLLVVM) threads the bilayer. At 740–858 (DITCYFLNKC…TQTKENESKA (119 aa)) the chain is on the cytoplasmic side. The segment at 765–858 (PGAKGKDMEE…TQTKENESKA (94 aa)) is disordered. Basic and acidic residues-rich tracts occupy residues 768 to 809 (KGKD…HTEP) and 817 to 834 (EPEK…ESEA). Residues Ser-780 and Ser-784 each carry the phosphoserine modification.

In terms of assembly, interacts with MDK. Found in a complex with SLC39A6, SLC39A10 and with NCAM1; this complex controls NCAM1 phosphorylation and integration into focal adhesion complexes during epithelial-tomesenchymal transition. Interacts with synaptic plasticity regulator PANTS. Polysialylated by ST8SIA2 and ST8SIA4. Polysialylation modulates cell interactions by confering both attractive and repulsive properties that are highly regulated by ST8SIA2 and ST8SIA4. Polysialylation is formed on a-2,3-linked sialic acid of core glycans.

Its subcellular location is the cell membrane. In terms of biological role, this protein is a cell adhesion molecule involved in neuron-neuron adhesion, neurite fasciculation, outgrowth of neurites, etc. The polypeptide is Neural cell adhesion molecule 1 (Rattus norvegicus (Rat)).